The chain runs to 252 residues: Trans-aconitate 2-methyltransferase (252 aa).

The protein belongs to the methyltransferase superfamily. Tam family. As to quaternary structure, monomer.

It localises to the cytoplasm. It catalyses the reaction trans-aconitate + S-adenosyl-L-methionine = (E)-3-(methoxycarbonyl)pent-2-enedioate + S-adenosyl-L-homocysteine. Functionally, catalyzes the S-adenosylmethionine monomethyl esterification of trans-aconitate at high affinity and of cis-aconitate, isocitrate, and citrate at lower velocities and affinities. This is Trans-aconitate 2-methyltransferase (tam) from Escherichia coli O157:H7.